We begin with the raw amino-acid sequence, 267 residues long: Outer membrane protein assembly factor BamD (267 aa).

A signal peptide spans 1–16; it reads MKKILLTVSLGLALSA. A lipid anchor (N-palmitoyl cysteine) is attached at Cys-17. A lipid anchor (S-diacylglycerol cysteine) is attached at Cys-17.

The protein belongs to the BamD family. In terms of assembly, part of the Bam complex.

The protein resides in the cell outer membrane. Functionally, part of the outer membrane protein assembly complex, which is involved in assembly and insertion of beta-barrel proteins into the outer membrane. Required for efficient transformation of Neisseria gonorrhoeae by species-related DNA. The polypeptide is Outer membrane protein assembly factor BamD (Neisseria gonorrhoeae).